The primary structure comprises 70 residues: DNA gyrase inhibitor YacG (70 aa).

Positions 7, 10, 26, and 30 each coordinate Zn(2+).

It belongs to the DNA gyrase inhibitor YacG family. Interacts with GyrB. It depends on Zn(2+) as a cofactor.

Its function is as follows. Inhibits all the catalytic activities of DNA gyrase by preventing its interaction with DNA. Acts by binding directly to the C-terminal domain of GyrB, which probably disrupts DNA binding by the gyrase. This chain is DNA gyrase inhibitor YacG, found in Shewanella sediminis (strain HAW-EB3).